Reading from the N-terminus, the 205-residue chain is Small ribosomal subunit protein uS4 (205 aa).

The S4 RNA-binding domain occupies 94 to 157 (SRLDAVVYRA…RNLALVLEAL (64 aa)).

It belongs to the universal ribosomal protein uS4 family. As to quaternary structure, part of the 30S ribosomal subunit. Contacts protein S5. The interaction surface between S4 and S5 is involved in control of translational fidelity.

Functionally, one of the primary rRNA binding proteins, it binds directly to 16S rRNA where it nucleates assembly of the body of the 30S subunit. Its function is as follows. With S5 and S12 plays an important role in translational accuracy. This Hyphomonas neptunium (strain ATCC 15444) protein is Small ribosomal subunit protein uS4.